Here is a 347-residue protein sequence, read N- to C-terminus: NADH-ubiquinone oxidoreductase chain 2 (347 aa).

Helical transmembrane passes span 3 to 23, 25 to 45, 59 to 79, 96 to 116, 127 to 147, 149 to 169, 178 to 198, 201 to 221, 239 to 259, 274 to 294, and 326 to 346; these read PMTFTVLLATIMSGTSIVLLS, HWFMTWLGFEMNMMAIIPVLM, YFLTQATASMILVLAIIINTM, ILITLALVMKLGLAPFHFWVP, GLILLTWQKIAPLSLLYQIYP, LNTNLLLTMSLLSIMIGGWGG, IMAYSSIAHMGWMIAIMTYNP, SLLNLIIYITMTSSMFMLLII, IVTTMMLISLLSLGGLPPLTG, NSLILPTLMSILALLNLFFYM, and TAPLISISTMILPLTPLLITL.

This sequence belongs to the complex I subunit 2 family. In terms of assembly, core subunit of respiratory chain NADH dehydrogenase (Complex I) which is composed of 45 different subunits. Interacts with TMEM242.

The protein resides in the mitochondrion inner membrane. The enzyme catalyses a ubiquinone + NADH + 5 H(+)(in) = a ubiquinol + NAD(+) + 4 H(+)(out). Core subunit of the mitochondrial membrane respiratory chain NADH dehydrogenase (Complex I) which catalyzes electron transfer from NADH through the respiratory chain, using ubiquinone as an electron acceptor. Essential for the catalytic activity and assembly of complex I. The polypeptide is NADH-ubiquinone oxidoreductase chain 2 (Sylvisorex ollula (Greater forest shrew)).